Reading from the N-terminus, the 204-residue chain is WW domain-containing protein C11B10.08 (204 aa).

In terms of domain architecture, WW spans 7 to 43 (EGLPNGWVAQWDERYKCYFYVNESDPKAKPQWECPVR). Residues 32–117 (PKAKPQWECP…GYPQQPYYYP (86 aa)) form a disordered region. Composition is skewed to low complexity over residues 66–100 (YSNS…GAAP) and 108–117 (GYPQQPYYYP).

It localises to the cytoplasm. The protein resides in the nucleus. This Schizosaccharomyces pombe (strain 972 / ATCC 24843) (Fission yeast) protein is WW domain-containing protein C11B10.08.